The sequence spans 72 residues: MAKEDCIEMQGTILETLPNTMFRVELENGHVVTAHISGKMRKNYIRILTGDKVTVEMTPYDLSKGRIIFRSR.

The S1-like domain maps to 2–72; the sequence is AKEDCIEMQG…SKGRIIFRSR (71 aa).

Belongs to the IF-1 family. In terms of assembly, component of the 30S ribosomal translation pre-initiation complex which assembles on the 30S ribosome in the order IF-2 and IF-3, IF-1 and N-formylmethionyl-tRNA(fMet); mRNA recruitment can occur at any time during PIC assembly.

Its subcellular location is the cytoplasm. Functionally, one of the essential components for the initiation of protein synthesis. Stabilizes the binding of IF-2 and IF-3 on the 30S subunit to which N-formylmethionyl-tRNA(fMet) subsequently binds. Helps modulate mRNA selection, yielding the 30S pre-initiation complex (PIC). Upon addition of the 50S ribosomal subunit IF-1, IF-2 and IF-3 are released leaving the mature 70S translation initiation complex. The polypeptide is Translation initiation factor IF-1 (Haemophilus influenzae (strain ATCC 51907 / DSM 11121 / KW20 / Rd)).